Consider the following 703-residue polypeptide: 1,4-alpha-glucan-branching enzyme (703 aa).

(1,4-alpha-D-glucosyl)n is bound by residues Trp-93 and Lys-130. Asp-355 (nucleophile) is an active-site residue. Glu-415 functions as the Proton donor in the catalytic mechanism.

This sequence belongs to the glycosyl hydrolase 13 family. GlgB subfamily.

The protein localises to the cytoplasm. The catalysed reaction is Transfers a segment of a (1-&gt;4)-alpha-D-glucan chain to a primary hydroxy group in a similar glucan chain.. It participates in glycan biosynthesis; glycogen biosynthesis. Its function is as follows. Glycogen-branching enzyme participates in the glycogen biosynthetic process along with glycogenin and glycogen synthase. Generates alpha-1,6-glucosidic branches from alpha-1,4-linked glucose chains, to increase solubility of the glycogen polymer. The chain is 1,4-alpha-glucan-branching enzyme (GLC3) from Eremothecium gossypii (strain ATCC 10895 / CBS 109.51 / FGSC 9923 / NRRL Y-1056) (Yeast).